A 333-amino-acid chain; its full sequence is Ornithine carbamoyltransferase (333 aa).

Carbamoyl phosphate-binding positions include 56–59 (STRT), R107, and 134–137 (HPTQ). L-ornithine is bound by residues N167, D231, and 235–236 (SM). Residues 273–274 (CL) and R318 contribute to the carbamoyl phosphate site.

Belongs to the aspartate/ornithine carbamoyltransferase superfamily. OTCase family.

It localises to the cytoplasm. The enzyme catalyses carbamoyl phosphate + L-ornithine = L-citrulline + phosphate + H(+). The protein operates within amino-acid degradation; L-arginine degradation via ADI pathway; carbamoyl phosphate from L-arginine: step 2/2. Functionally, reversibly catalyzes the transfer of the carbamoyl group from carbamoyl phosphate (CP) to the N(epsilon) atom of ornithine (ORN) to produce L-citrulline. The sequence is that of Ornithine carbamoyltransferase from Clostridium botulinum (strain ATCC 19397 / Type A).